A 320-amino-acid polypeptide reads, in one-letter code: MEVEIVWLVKAAWITVWIVSILPLVIASIPSSKLNSFRELVLSFAGRGKILHPSSQKFTVPQKFFGHFYVVGVVWTTLLLAATWMYACKMAGGSHVFSFHMTHVEHRFKVGRAVFLLLLMEIHVLRRVIESFYVFKYSTSARMHILAYVGALFYYVAAPLSLCSNIAPEVARFVGSQVAEFIASGKSHSHDFNLLLSISPLMKLGSLQWIGGAIFLWGWIHQRRCHAILGSLREYPSQAKEYIIPYGDWFEMVSCPHFLAEIVLYLGLLISSGGTDISIWLLFGFVAANLTYAAGETHRWYLQKFENYPASRHAIFPHVY.

The next 6 helical transmembrane spans lie at 5–25 (IVWL…LPLV), 64–84 (FFGH…AATW), 143–163 (MHIL…LSLC), 200–220 (PLMK…WGWI), 243–263 (IIPY…AEIV), and 266–286 (LGLL…FGFV).

It belongs to the steroid 5-alpha reductase family. Polyprenal reductase subfamily. As to expression, expressed in roots and flowers.

The protein localises to the cell membrane. The catalysed reaction is a di-trans,poly-cis-dolichal + NADP(+) = a di-trans,poly-cis-polyprenal + NADPH + H(+). It participates in protein modification; protein glycosylation. Functionally, plays a key role in early steps of protein N-linked glycosylation by being involved in the conversion of polyprenol into dolichol. Acts as a polyprenal reductase that mediates the reduction of polyprenal into dolichal in a NADP-dependent mechanism. Dolichols are required for the synthesis of dolichol-linked monosaccharides and the oligosaccharide precursor used for N-glycosylation. Involved in the regulation of plant growth and reproductive processes. This chain is Polyprenal reductase 1, found in Arabidopsis thaliana (Mouse-ear cress).